The primary structure comprises 178 residues: Large ribosomal subunit protein uL6 (178 aa).

Belongs to the universal ribosomal protein uL6 family. Part of the 50S ribosomal subunit.

Functionally, this protein binds to the 23S rRNA, and is important in its secondary structure. It is located near the subunit interface in the base of the L7/L12 stalk, and near the tRNA binding site of the peptidyltransferase center. This Limosilactobacillus fermentum (strain NBRC 3956 / LMG 18251) (Lactobacillus fermentum) protein is Large ribosomal subunit protein uL6.